The following is a 95-amino-acid chain: Large ribosomal subunit protein bL27 (95 aa).

A propeptide spanning residues 1 to 9 is cleaved from the precursor; the sequence is MLNMNLQFF.

This sequence belongs to the bacterial ribosomal protein bL27 family. Post-translationally, the N-terminus is cleaved by ribosomal processing cysteine protease Prp.

The protein is Large ribosomal subunit protein bL27 of Agathobacter rectalis (strain ATCC 33656 / DSM 3377 / JCM 17463 / KCTC 5835 / VPI 0990) (Eubacterium rectale).